The sequence spans 31 residues: U1-theraphotoxin-Cv1a (31 aa).

Intrachain disulfides connect C2/C16, C9/C21, and C15/C28.

Expressed by the venom gland.

Its subcellular location is the secreted. Functionally, insecticidal toxin that induces reversible paralysis in crickets but not in cockroaches and mice. Molecular target unknown. In Coremiocnemis valida (Singapore tarantula), this protein is U1-theraphotoxin-Cv1a.